The sequence spans 450 residues: Membrane-bound lytic murein transglycosylase F 2 (450 aa).

A signal peptide spans 1–20; that stretch reads MRTWIAILAVVLVLLLNACT. The non-LT domain stretch occupies residues 21 to 261; it reads DGPEDGPRLE…AMENRYYTYV (241 aa). The segment at 262 to 450 is LT domain; sequence GEFDFVDLRA…YRDVIRQAFE (189 aa). Glutamate 308 is a catalytic residue.

It in the N-terminal section; belongs to the bacterial solute-binding protein 3 family. The protein in the C-terminal section; belongs to the transglycosylase Slt family.

The protein resides in the cell outer membrane. The enzyme catalyses Exolytic cleavage of the (1-&gt;4)-beta-glycosidic linkage between N-acetylmuramic acid (MurNAc) and N-acetylglucosamine (GlcNAc) residues in peptidoglycan, from either the reducing or the non-reducing ends of the peptidoglycan chains, with concomitant formation of a 1,6-anhydrobond in the MurNAc residue.. In terms of biological role, murein-degrading enzyme that degrades murein glycan strands and insoluble, high-molecular weight murein sacculi, with the concomitant formation of a 1,6-anhydromuramoyl product. Lytic transglycosylases (LTs) play an integral role in the metabolism of the peptidoglycan (PG) sacculus. Their lytic action creates space within the PG sacculus to allow for its expansion as well as for the insertion of various structures such as secretion systems and flagella. In Alkalilimnicola ehrlichii (strain ATCC BAA-1101 / DSM 17681 / MLHE-1), this protein is Membrane-bound lytic murein transglycosylase F 2.